A 174-amino-acid chain; its full sequence is uncharacterized protein (174 aa).

Residues 137-174 (TNVTLGDDTPKSYDAPVSAIPPPATATTANATGVKPLE) form a disordered region.

This is an uncharacterized protein from Acanthamoeba polyphaga (Amoeba).